We begin with the raw amino-acid sequence, 106 residues long: PAT complex subunit Asterix (106 aa).

The segment at 1–29 (MSTNNMSDPRRPNKVLRYKPPPSECNPAL) is disordered. Position 2 is an N-acetylserine (serine 2). At 2 to 32 (STNNMSDPRRPNKVLRYKPPPSECNPALDDP) the chain is on the cytoplasmic side. Residues 33–51 (TPDYMNLLGMIFSMCGLML) traverse the membrane as a helical segment. Lysine 52 is a topological domain (lumenal). Residues 53–70 (LKWCAWVAVYCSFISFAN) form a helical membrane-spanning segment. Residues 71 to 74 (SRSS) lie on the Cytoplasmic side of the membrane. Residues 75 to 95 (EDTKQMMSSFMLSISAVVMSY) traverse the membrane as a helical segment. Topologically, residues 96 to 106 (LQNPQPMTPPW) are lumenal.

It belongs to the Asterix family. In terms of assembly, component of the PAT complex, composed of WDR83OS/Asterix and CCDC47. The PAT complex is part of the multi-pass translocon (MPT) complex, composed of three subcomplexes, the GEL complex (composed of RAB5IF/OPTI and TMCO1), the BOS complex (composed of NCLN/Nicalin, NOMO1 and TMEM147) and the PAT complex (composed of WDR83OS/Asterix and CCDC47). The MPT complex associates with the SEC61 complex.

The protein localises to the endoplasmic reticulum membrane. In terms of biological role, component of the multi-pass translocon (MPT) complex that mediates insertion of multi-pass membrane proteins into the lipid bilayer of membranes. The MPT complex takes over after the SEC61 complex: following membrane insertion of the first few transmembrane segments of proteins by the SEC61 complex, the MPT complex occludes the lateral gate of the SEC61 complex to promote insertion of subsequent transmembrane regions. Within the MPT complex, the PAT subcomplex sequesters any highly polar regions in the transmembrane domains away from the non-polar membrane environment until they can be buried in the interior of the fully assembled protein. Within the PAT subcomplex, WDR83OS/Asterix binds to and redirects the substrate to a location behind the SEC61 complex. The chain is PAT complex subunit Asterix (WDR83OS) from Canis lupus familiaris (Dog).